Reading from the N-terminus, the 152-residue chain is Large ribosomal subunit protein uL15 (152 aa).

The segment at 18 to 37 is disordered; the sequence is RVARGIGSGKGKTAGRGVKG. Positions 23-35 are enriched in gly residues; it reads IGSGKGKTAGRGV.

This sequence belongs to the universal ribosomal protein uL15 family. As to quaternary structure, part of the 50S ribosomal subunit.

Its function is as follows. Binds to the 23S rRNA. This is Large ribosomal subunit protein uL15 from Rickettsia bellii (strain OSU 85-389).